A 221-amino-acid polypeptide reads, in one-letter code: Transcription factor HES-4 (221 aa).

Positions 1–22 (MAADTPGKPSASPMAGAPASAS) are enriched in low complexity. The interval 1 to 49 (MAADTPGKPSASPMAGAPASASRTPDKPRSAAEHRKSSKPVMEKRRRAR) is disordered. Positions 24–35 (TPDKPRSAAEHR) are enriched in basic and acidic residues. One can recognise a bHLH domain in the interval 34-91 (HRKSSKPVMEKRRRARINESLAQLKTLILDALRKESSRHSKLEKADILEMTVRHLRSL). An Orange domain is found at 110–143 (YRAGFHECLAEVNRFLAGCEGVPADVRSRLLGHL). The interval 201 to 221 (LPAAPRAGPQGPGGPWRPWLR) is disordered. The WRPW motif signature appears at 216 to 219 (WRPW).

In terms of assembly, transcription repression requires formation of a complex with a corepressor protein of the Groucho/TLE family.

Its subcellular location is the nucleus. In terms of biological role, transcriptional repressor. Binds DNA on N-box motifs: 5'-CACNAG-3'. The polypeptide is Transcription factor HES-4 (HES4) (Homo sapiens (Human)).